Consider the following 303-residue polypeptide: MSFTTKVKEELIHLSTGDNNELAAIIKLSGSLGLAHQSLHLSITTENAKIARYIYSFIEDAYVIVPEIRYHQKTNLRKNRVYTVYVEQGVETILADLKLADSFFGLETGIEPQVLSDDNAGRSYLKGAFLTAGSIRDPESGKYQLEIYSVYLDHAQDLAQLMQKFMLDAKTIEHKSGAVTYLQKAEDIMDFLIIIGAMSCKEDFEAIKLLREARNDINRANNAETANIAKTISASMKTINNIIKIMDTIGLESLPIELQQVAQLRVKHPDYSIQQVADALEFPITKSGVNHRLRKINKIADDL.

Residues 272–303 constitute a DNA-binding region (H-T-H motif); the sequence is SIQQVADALEFPITKSGVNHRLRKINKIADDL.

Belongs to the WhiA family.

In terms of biological role, involved in cell division and chromosome segregation. The polypeptide is Probable cell division protein WhiA (Streptococcus pyogenes serotype M6 (strain ATCC BAA-946 / MGAS10394)).